Here is a 993-residue protein sequence, read N- to C-terminus: UPF0182 protein MAV_4137 (993 aa).

The next 7 helical transmembrane spans lie at 18–38 (ILILIALGVIALLLAGPRLID), 63–83 (FVVFLIAGLLVGGIVFAGLAV), 113–133 (LVSIGVPVAIGLLAGIIAQSY), 175–195 (FVAVFLAFVANLLAHYIFGGI), 210–230 (IQLVTLVGLLVLLKAVAYWLD), 254–274 (AVLPAKLILMAIALICAAAVF), and 287–307 (IGLVLLLLSSLIVGAGWPLIV). The segment at 903 to 941 (NIQPTEGGAPAASPPANAPAPAVTPGSAPPVAAPPVPDG) is disordered. The span at 929–939 (SAPPVAAPPVP) shows a compositional bias: pro residues.

It belongs to the UPF0182 family.

The protein resides in the cell membrane. The protein is UPF0182 protein MAV_4137 of Mycobacterium avium (strain 104).